Consider the following 355-residue polypeptide: Putative [LysW]-L-2-aminoadipate/[LysW]-L-glutamate phosphate reductase (355 aa).

13-16 (SGMT) is a binding site for NADP(+). Residue Cys153 is part of the active site. Asn323 provides a ligand contact to NADP(+).

This sequence belongs to the NAGSA dehydrogenase family. Type 1 subfamily. LysY sub-subfamily.

It is found in the cytoplasm. The enzyme catalyses [amino-group carrier protein]-C-terminal-N-(1-carboxy-5-oxopentan-1-yl)-L-glutamine + phosphate + NADP(+) = [amino-group carrier protein]-C-terminal-N-(1-carboxy-5-phosphooxy-5-oxopentan-1-yl)-L-glutamine + NADPH + H(+). It catalyses the reaction [amino-group carrier protein]-C-terminal-gamma-(L-glutamyl-5-semialdehyde)-L-glutamate + phosphate + NADP(+) = [amino-group carrier protein]-C-terminal-gamma-(5-phospho-L-glutamyl)-L-glutamate + NADPH + H(+). It participates in amino-acid biosynthesis; L-lysine biosynthesis via AAA pathway; L-lysine from L-alpha-aminoadipate (Thermus route): step 3/5. It functions in the pathway amino-acid biosynthesis; L-arginine biosynthesis. Functionally, involved in both the arginine and lysine biosynthetic pathways. This is Putative [LysW]-L-2-aminoadipate/[LysW]-L-glutamate phosphate reductase from Aeropyrum pernix (strain ATCC 700893 / DSM 11879 / JCM 9820 / NBRC 100138 / K1).